Reading from the N-terminus, the 354-residue chain is S-adenosylmethionine-dependent nucleotide dehydratase RSAD2 (354 aa).

The region spanning 62–282 is the Radical SAM core domain; the sequence is AMTPTSVNYH…LDRHSSISCL (221 aa). [4Fe-4S] cluster contacts are provided by cysteine 76, cysteine 80, and cysteine 83.

It belongs to the radical SAM superfamily. RSAD2 family. The cofactor is [4Fe-4S] cluster. In terms of tissue distribution, constitutively expressed in spleen, head kidney and trunk kidney. Following viral infection, detected in most organs including liver, gill, intestine, heart, muscle and brain.

Its subcellular location is the endoplasmic reticulum membrane. Its function is as follows. Interferon-inducible iron-sulfur (4FE-4S) cluster-binding antiviral protein which plays a major role in the cell antiviral state induced by type I and type II interferon. The polypeptide is S-adenosylmethionine-dependent nucleotide dehydratase RSAD2 (Siniperca chuatsi (Mandarin fish)).